The chain runs to 349 residues: 4-hydroxy-3-methylbut-2-enyl diphosphate reductase (349 aa).

[4Fe-4S] cluster is bound at residue Cys-18. Residues His-47 and His-83 each contribute to the (2E)-4-hydroxy-3-methylbut-2-enyl diphosphate site. 2 residues coordinate dimethylallyl diphosphate: His-47 and His-83. Isopentenyl diphosphate is bound by residues His-47 and His-83. Cys-105 provides a ligand contact to [4Fe-4S] cluster. His-133 is a binding site for (2E)-4-hydroxy-3-methylbut-2-enyl diphosphate. His-133 provides a ligand contact to dimethylallyl diphosphate. His-133 contacts isopentenyl diphosphate. Glu-135 serves as the catalytic Proton donor. Thr-174 provides a ligand contact to (2E)-4-hydroxy-3-methylbut-2-enyl diphosphate. Cys-204 lines the [4Fe-4S] cluster pocket. Residues Ser-232, Ser-233, Asn-234, and Ser-277 each contribute to the (2E)-4-hydroxy-3-methylbut-2-enyl diphosphate site. Ser-232, Ser-233, Asn-234, and Ser-277 together coordinate dimethylallyl diphosphate. Residues Ser-232, Ser-233, Asn-234, and Ser-277 each contribute to the isopentenyl diphosphate site.

Belongs to the IspH family. [4Fe-4S] cluster is required as a cofactor.

It catalyses the reaction isopentenyl diphosphate + 2 oxidized [2Fe-2S]-[ferredoxin] + H2O = (2E)-4-hydroxy-3-methylbut-2-enyl diphosphate + 2 reduced [2Fe-2S]-[ferredoxin] + 2 H(+). The enzyme catalyses dimethylallyl diphosphate + 2 oxidized [2Fe-2S]-[ferredoxin] + H2O = (2E)-4-hydroxy-3-methylbut-2-enyl diphosphate + 2 reduced [2Fe-2S]-[ferredoxin] + 2 H(+). The protein operates within isoprenoid biosynthesis; dimethylallyl diphosphate biosynthesis; dimethylallyl diphosphate from (2E)-4-hydroxy-3-methylbutenyl diphosphate: step 1/1. It functions in the pathway isoprenoid biosynthesis; isopentenyl diphosphate biosynthesis via DXP pathway; isopentenyl diphosphate from 1-deoxy-D-xylulose 5-phosphate: step 6/6. Catalyzes the conversion of 1-hydroxy-2-methyl-2-(E)-butenyl 4-diphosphate (HMBPP) into a mixture of isopentenyl diphosphate (IPP) and dimethylallyl diphosphate (DMAPP). Acts in the terminal step of the DOXP/MEP pathway for isoprenoid precursor biosynthesis. This Bartonella bacilliformis (strain ATCC 35685 / KC583 / Herrer 020/F12,63) protein is 4-hydroxy-3-methylbut-2-enyl diphosphate reductase.